Consider the following 482-residue polypeptide: Nucleoside triphosphate pyrophosphatase/Nudix hydrolase fusion protein (482 aa).

Residues 1–299 (MSIPLILASK…DLWNVGRGEL (299 aa)) form a maf-like region. The Proton acceptor role is filled by aspartate 167. Positions 338-475 (GTNGASGILL…TDWPRFAARL (138 aa)) constitute a Nudix hydrolase domain.

This sequence in the N-terminal section; belongs to the Maf family. The cofactor is a divalent metal cation.

The protein resides in the cytoplasm. The enzyme catalyses a ribonucleoside 5'-triphosphate + H2O = a ribonucleoside 5'-phosphate + diphosphate + H(+). It catalyses the reaction a 2'-deoxyribonucleoside 5'-triphosphate + H2O = a 2'-deoxyribonucleoside 5'-phosphate + diphosphate + H(+). In terms of biological role, nucleoside triphosphate pyrophosphatase. May have a dual role in cell division arrest and in preventing the incorporation of modified nucleotides into cellular nucleic acids. The chain is Nucleoside triphosphate pyrophosphatase/Nudix hydrolase fusion protein from Bifidobacterium longum (strain NCC 2705).